We begin with the raw amino-acid sequence, 606 residues long: Sporulation kinase A (606 aa).

The 71-residue stretch at 3 to 73 (QDTQHVKPLQ…SYFYNEHHLM (71 aa)) folds into the PAS 1 domain. Residues 77–116 (FRFIKKDHTIVWVEAAVEIVTTRAERTEREIILKMKVLEE) form the PAC 1 domain. Positions 140–214 (YITDDYERLV…IRMQKGMEVG (75 aa)) constitute a PAS 2 domain. One can recognise a PAC 2 domain in the interval 218–255 (QTWKRLDGTPVHLEVKASPTVYKNQQAELLLLIDISSR). The 71-residue stretch at 265–335 (SRERYQLLIQ…ERIQNIAEQK (71 aa)) folds into the PAS 3 domain. Residues 402 to 606 (GIAHEIRNPL…TAFKISFPKK (205 aa)) enclose the Histidine kinase domain. Position 405 is a phosphohistidine; by autocatalysis (H405).

It carries out the reaction ATP + protein L-histidine = ADP + protein N-phospho-L-histidine.. In terms of biological role, phosphorylates the sporulation-regulatory proteins spo0A and spo0F. It also autophosphorylates in the presence of ATP. The sequence is that of Sporulation kinase A (kinA) from Bacillus subtilis (strain 168).